A 163-amino-acid polypeptide reads, in one-letter code: Cytochrome b6-f complex subunit 4 (163 aa).

Helical transmembrane passes span 36-56 (LLYIFPVVILGTIACNVGLAV), 95-115 (LLGVLLMVSVPTGLLTVPFLE), and 131-151 (TVFLIGTAVALWLGIGATLPI).

This sequence belongs to the cytochrome b family. PetD subfamily. As to quaternary structure, the 4 large subunits of the cytochrome b6-f complex are cytochrome b6, subunit IV (17 kDa polypeptide, petD), cytochrome f and the Rieske protein, while the 4 small subunits are petG, petL, petM and petN. The complex functions as a dimer.

It localises to the plastid. Its subcellular location is the chloroplast thylakoid membrane. In terms of biological role, component of the cytochrome b6-f complex, which mediates electron transfer between photosystem II (PSII) and photosystem I (PSI), cyclic electron flow around PSI, and state transitions. In Drimys granadensis, this protein is Cytochrome b6-f complex subunit 4.